The chain runs to 202 residues: Dephospho-CoA kinase (202 aa).

Positions 4-200 (VVGVTGGIGS…QRYLAATVAQ (197 aa)) constitute a DPCK domain. 12-17 (GSGKSA) provides a ligand contact to ATP.

It belongs to the CoaE family.

The protein localises to the cytoplasm. The enzyme catalyses 3'-dephospho-CoA + ATP = ADP + CoA + H(+). It functions in the pathway cofactor biosynthesis; coenzyme A biosynthesis; CoA from (R)-pantothenate: step 5/5. Its function is as follows. Catalyzes the phosphorylation of the 3'-hydroxyl group of dephosphocoenzyme A to form coenzyme A. The sequence is that of Dephospho-CoA kinase from Idiomarina loihiensis (strain ATCC BAA-735 / DSM 15497 / L2-TR).